The following is a 356-amino-acid chain: Cyanide hydratase (356 aa).

The CN hydrolase domain maps to 6–285 (YKAAAVTSEP…DGLLFVDIDL (280 aa)). Glu-46 functions as the Proton acceptor in the catalytic mechanism. Residue Lys-128 is part of the active site. Cys-163 (nucleophile) is an active-site residue.

The protein belongs to the carbon-nitrogen hydrolase superfamily. Nitrilase family. As to quaternary structure, oligomer of dimers, forming left-handed helical fibers.

The catalysed reaction is formamide = hydrogen cyanide + H2O. Functionally, catalyzes the hydration of cyanide to formamide. Degradation of cyanide may be important for plant pathogenic fungi in infection of cyanogenic plants. The protein is Cyanide hydratase of Leptosphaeria maculans (Blackleg fungus).